We begin with the raw amino-acid sequence, 290 residues long: Phosphoribulokinase (290 aa).

ATP is bound at residue 12-20 (GSSGAGTTS).

Belongs to the phosphoribulokinase family.

The catalysed reaction is D-ribulose 5-phosphate + ATP = D-ribulose 1,5-bisphosphate + ADP + H(+). It functions in the pathway carbohydrate biosynthesis; Calvin cycle. The polypeptide is Phosphoribulokinase (cbbP) (Nitrobacter vulgaris).